The following is a 363-amino-acid chain: tRNA N6-adenosine threonylcarbamoyltransferase (363 aa).

His-121 and His-125 together coordinate Fe cation. Residues 143 to 147 (LASGG), Asp-176, Gly-189, and Asn-287 contribute to the substrate site. Asp-315 is a binding site for Fe cation.

This sequence belongs to the KAE1 / TsaD family. Requires Fe(2+) as cofactor.

The protein resides in the cytoplasm. It carries out the reaction L-threonylcarbamoyladenylate + adenosine(37) in tRNA = N(6)-L-threonylcarbamoyladenosine(37) in tRNA + AMP + H(+). In terms of biological role, required for the formation of a threonylcarbamoyl group on adenosine at position 37 (t(6)A37) in tRNAs that read codons beginning with adenine. Is involved in the transfer of the threonylcarbamoyl moiety of threonylcarbamoyl-AMP (TC-AMP) to the N6 group of A37, together with TsaE and TsaB. TsaD likely plays a direct catalytic role in this reaction. The polypeptide is tRNA N6-adenosine threonylcarbamoyltransferase (Rhodopseudomonas palustris (strain ATCC BAA-98 / CGA009)).